Consider the following 328-residue polypeptide: dTDP-3,4-didehydro-2,6-dideoxy-alpha-D-glucose 3-reductase (328 aa).

A substrate-binding site is contributed by Arg-20. NADP(+) is bound by residues 38–39 (SR), Leu-75, and His-80. The active-site Proton donor is the Lys-98. Positions 166 and 178 each coordinate NADP(+). Substrate is bound by residues Tyr-236 and Thr-256.

This sequence belongs to the Gfo/Idh/MocA family.

The catalysed reaction is dTDP-4-dehydro-2,6-dideoxy-alpha-D-glucose + NADP(+) = dTDP-3,4-didehydro-2,6-dideoxy-alpha-D-glucose + NADPH + H(+). It participates in antibiotic biosynthesis. Involved in the biosynthesis of one of the two 2,6-deoxysugars, dTDP-L-oleandrose, attached to the macrolactone ring oleandolide to produce the aglycone antibiotic oleandomycin. Catalyzes the reduction of the C-3 keto moiety of dTDP-3,4-diketo-2,6-dideoxy-alpha-D-glucose to yield dTDP-4-keto-2,6-dideoxy-alpha-D-glucose. NADPH is the better reductant, however NADH can also be used. This Streptomyces antibioticus protein is dTDP-3,4-didehydro-2,6-dideoxy-alpha-D-glucose 3-reductase.